A 192-amino-acid polypeptide reads, in one-letter code: UPF0312 protein PputW619_0484 (192 aa).

Residues 1-23 (MLKKTFAALALGTALLSAGQAMA) form the signal peptide.

Belongs to the UPF0312 family. Type 1 subfamily.

It is found in the periplasm. In Pseudomonas putida (strain W619), this protein is UPF0312 protein PputW619_0484.